The sequence spans 213 residues: Ribulose-phosphate 3-epimerase (213 aa).

Serine 9 serves as a coordination point for substrate. A divalent metal cation-binding residues include histidine 34, aspartate 36, and histidine 66. The Proton acceptor role is filled by aspartate 36. Substrate contacts are provided by residues histidine 66, 139 to 142 (GFGG), 166 to 168 (DGG), and 186 to 187 (GS). Aspartate 166 serves as a coordination point for a divalent metal cation. The active-site Proton donor is aspartate 166.

It belongs to the ribulose-phosphate 3-epimerase family. Requires Co(2+) as cofactor. Fe(2+) serves as cofactor. Mn(2+) is required as a cofactor. It depends on Zn(2+) as a cofactor.

It carries out the reaction D-ribulose 5-phosphate = D-xylulose 5-phosphate. Its pathway is carbohydrate degradation; pentose phosphate pathway; D-xylulose 5-phosphate from D-ribulose 5-phosphate (non-oxidative stage): step 1/1. Catalyzes the reversible epimerization of D-ribulose 5-phosphate to D-xylulose 5-phosphate. This is Ribulose-phosphate 3-epimerase (RPE1) from Encephalitozoon cuniculi (strain GB-M1) (Microsporidian parasite).